The following is a 74-amino-acid chain: NAD(P)H-quinone oxidoreductase subunit L (74 aa).

The next 2 helical transmembrane spans lie at 5–25 and 43–63; these read LIIAALYLALAGAYLLVVPAA and AFMYFLVFFFFPGLLLLAPLL.

This sequence belongs to the complex I NdhL subunit family. As to quaternary structure, NDH-1 can be composed of about 15 different subunits; different subcomplexes with different compositions have been identified which probably have different functions.

Its subcellular location is the cellular thylakoid membrane. It carries out the reaction a plastoquinone + NADH + (n+1) H(+)(in) = a plastoquinol + NAD(+) + n H(+)(out). The catalysed reaction is a plastoquinone + NADPH + (n+1) H(+)(in) = a plastoquinol + NADP(+) + n H(+)(out). NDH-1 shuttles electrons from an unknown electron donor, via FMN and iron-sulfur (Fe-S) centers, to quinones in the respiratory and/or the photosynthetic chain. The immediate electron acceptor for the enzyme in this species is believed to be plastoquinone. Couples the redox reaction to proton translocation, and thus conserves the redox energy in a proton gradient. Cyanobacterial NDH-1 also plays a role in inorganic carbon-concentration. This is NAD(P)H-quinone oxidoreductase subunit L from Synechococcus elongatus (strain ATCC 33912 / PCC 7942 / FACHB-805) (Anacystis nidulans R2).